A 358-amino-acid polypeptide reads, in one-letter code: Serine/threonine-protein phosphatase 2A activator (358 aa).

Residues 1–20 (MAEGERQPPPDSSEEAPPAT) are disordered. Alanine 2 bears the N-acetylalanine mark. Residues arginine 183, threonine 188, and glycine 189 each contribute to the ATP site. Mg(2+)-binding residues include glycine 243 and aspartate 249. ATP is bound by residues proline 339, glutamine 342, and histidine 343.

Belongs to the PTPA-type PPIase family. In terms of assembly, associates with PP2A heterodimeric core enzyme PP2A(D), composed of a 36 kDa catalytic subunit (subunit C) and a 65 kDa constant regulatory subunit (PR65 or subunit A). Interacts with the catalytic subunit PPP2CA (via C-terminus). Interacts with PPP2CB. In terms of tissue distribution, widely expressed.

Its subcellular location is the cytoplasm. The protein resides in the nucleus. It catalyses the reaction [protein]-peptidylproline (omega=180) = [protein]-peptidylproline (omega=0). Functionally, PPIases accelerate the folding of proteins. It catalyzes the cis-trans isomerization of proline imidic peptide bonds in oligopeptides. Acts as a regulatory subunit for serine/threonine-protein phosphatase 2A (PP2A). Modulates PP2A activity or substrate specificity, probably by inducing a conformational change in the catalytic subunit, a proposed direct target of the PPIase. Can reactivate inactive phosphatase PP2A-phosphatase methylesterase complexes (PP2A(i)) in presence of ATP and Mg(2+). Reversibly stimulates the variable phosphotyrosyl phosphatase activity of PP2A core heterodimer PP2A(D) in presence of ATP and Mg(2+) (in vitro). The phosphotyrosyl phosphatase activity is dependent of an ATPase activity of the PP2A(D):PPP2R4 complex. Is involved in apoptosis; the function appears to be independent from PP2A. This is Serine/threonine-protein phosphatase 2A activator from Homo sapiens (Human).